The following is a 1802-amino-acid chain: U3 small nucleolar RNA-associated protein 10 (1802 aa).

One copy of the HEAT 1 repeat lies at 581–618 (MDLQALLPFVLVTLADPSERVRREAAGILTIIGSLHKN). A run of 2 helical transmembrane segments spans residues 946 to 966 (VQSG…AIVN) and 1002 to 1022 (ALLL…HSVM). HEAT repeat units follow at residues 1046–1083 (QTID…AFEH), 1253–1290 (LSLV…QNPE), 1297–1335 (TRML…KYGK), and 1758–1795 (ALLP…VLGE).

Belongs to the HEATR1/UTP10 family. In terms of assembly, component of the ribosomal small subunit (SSU) processome.

Its subcellular location is the nucleus. The protein localises to the nucleolus. It localises to the membrane. Involved in nucleolar processing of pre-18S ribosomal RNA. Involved in ribosome biosynthesis. The polypeptide is U3 small nucleolar RNA-associated protein 10 (Aspergillus oryzae (strain ATCC 42149 / RIB 40) (Yellow koji mold)).